Reading from the N-terminus, the 367-residue chain is Germination protease (367 aa).

The propeptide occupies 1–15 (MKEPLDLSKYSVRTD).

This sequence belongs to the peptidase A25 family. In terms of assembly, homotetramer. Autoproteolytically processed. The inactive tetrameric zymogen termed p46 autoprocesses to a smaller form termed p41, which is active only during spore germination.

It catalyses the reaction Endopeptidase action with P4 Glu or Asp, P1 preferably Glu &gt; Asp, P1' hydrophobic and P2' Ala.. Initiates the rapid degradation of small, acid-soluble proteins during spore germination. This chain is Germination protease, found in Bacillus thuringiensis subsp. konkukian (strain 97-27).